A 342-amino-acid polypeptide reads, in one-letter code: Putative aryl-alcohol dehydrogenase AAD16 (342 aa).

The protein belongs to the aldo/keto reductase family. Aldo/keto reductase 2 subfamily.

Functionally, putative aryl-alcohol dehydrogenase. The sequence is that of Putative aryl-alcohol dehydrogenase AAD16 from Saccharomyces cerevisiae (strain ATCC 204508 / S288c) (Baker's yeast).